We begin with the raw amino-acid sequence, 186 residues long: UPF0301 protein Mmc1_0726 (186 aa).

This sequence belongs to the UPF0301 (AlgH) family.

The chain is UPF0301 protein Mmc1_0726 from Magnetococcus marinus (strain ATCC BAA-1437 / JCM 17883 / MC-1).